The primary structure comprises 117 residues: Large ribosomal subunit protein bL19 (117 aa).

It belongs to the bacterial ribosomal protein bL19 family.

Its function is as follows. This protein is located at the 30S-50S ribosomal subunit interface and may play a role in the structure and function of the aminoacyl-tRNA binding site. The sequence is that of Large ribosomal subunit protein bL19 from Christiangramia forsetii (strain DSM 17595 / CGMCC 1.15422 / KT0803) (Gramella forsetii).